The primary structure comprises 373 residues: Ribosomal RNA small subunit methyltransferase H (373 aa).

S-adenosyl-L-methionine-binding positions include 92-94, aspartate 111, tyrosine 138, aspartate 159, and glutamine 166; that span reads GGH. Composition is skewed to basic and acidic residues over residues 343–355 and 363–373; these read AERA…ERNP and RALEKVGGRGS. The interval 343–373 is disordered; it reads AERADEQEIERNPRSAPVRLRALEKVGGRGS.

Belongs to the methyltransferase superfamily. RsmH family.

The protein resides in the cytoplasm. It catalyses the reaction cytidine(1402) in 16S rRNA + S-adenosyl-L-methionine = N(4)-methylcytidine(1402) in 16S rRNA + S-adenosyl-L-homocysteine + H(+). Specifically methylates the N4 position of cytidine in position 1402 (C1402) of 16S rRNA. The polypeptide is Ribosomal RNA small subunit methyltransferase H (Mycolicibacterium smegmatis (strain ATCC 700084 / mc(2)155) (Mycobacterium smegmatis)).